The following is a 258-amino-acid chain: Capsid protein (258 aa).

The short motif at 3-20 (KRPGDIIISTPGSKVRRR) is the Bipartite nuclear localization signal element. Residues 41–55 (RKRAWMNRPMYRKPM) carry the Nuclear localization signal motif. A zinc finger lies at 69-86 (CEGPCKVQSFEQRDDVKH). The Nuclear export signal motif lies at 102–123 (LTHRVGKRFCIKSIYILGKIWM). The Bipartite nuclear localization signal motif lies at 202-249 (KRFYRLNHHVTYNHQEAGKYENHTENALLLYMACTHASNPVYATLKIR).

The protein belongs to the geminiviridae capsid protein family. Homomultimer. Binds to single-stranded and double-stranded viral DNA. Interacts (via nuclear localization signals) with host importin alpha-1a.

The protein localises to the virion. It is found in the host nucleus. In terms of biological role, encapsidates the viral DNA into characteristic twinned ('geminate') particles. Binds the genomic viral ssDNA and shuttles it into and out of the cell nucleus. The CP of bipartite geminiviruses is not required for cell-to-cell or systemic movement. This chain is Capsid protein, found in Hewittia sublobata (Coralbush).